The following is a 199-amino-acid chain: Probable chemoreceptor glutamine deamidase CheD (199 aa).

This sequence belongs to the CheD family.

The enzyme catalyses L-glutaminyl-[protein] + H2O = L-glutamyl-[protein] + NH4(+). Its function is as follows. Probably deamidates glutamine residues to glutamate on methyl-accepting chemotaxis receptors (MCPs), playing an important role in chemotaxis. This Cereibacter sphaeroides (strain ATCC 17029 / ATH 2.4.9) (Rhodobacter sphaeroides) protein is Probable chemoreceptor glutamine deamidase CheD.